The chain runs to 223 residues: 7-cyano-7-deazaguanine synthase (223 aa).

Residue 10–20 (FSGGQDSTTCL) coordinates ATP. Positions 188, 197, 200, and 203 each coordinate Zn(2+).

It belongs to the QueC family. It depends on Zn(2+) as a cofactor.

The enzyme catalyses 7-carboxy-7-deazaguanine + NH4(+) + ATP = 7-cyano-7-deazaguanine + ADP + phosphate + H2O + H(+). Its pathway is purine metabolism; 7-cyano-7-deazaguanine biosynthesis. Catalyzes the ATP-dependent conversion of 7-carboxy-7-deazaguanine (CDG) to 7-cyano-7-deazaguanine (preQ(0)). The sequence is that of 7-cyano-7-deazaguanine synthase from Phocaeicola vulgatus (strain ATCC 8482 / DSM 1447 / JCM 5826 / CCUG 4940 / NBRC 14291 / NCTC 11154) (Bacteroides vulgatus).